A 228-amino-acid chain; its full sequence is Lipoprotein-releasing system ATP-binding protein LolD (228 aa).

The region spanning 7–227 (LQLSGIERHY…TIEDGKVVEL (221 aa)) is the ABC transporter domain. Residue 43-50 (APSGTGKS) coordinates ATP.

This sequence belongs to the ABC transporter superfamily. Lipoprotein translocase (TC 3.A.1.125) family. In terms of assembly, the complex is composed of two ATP-binding proteins (LolD) and two transmembrane proteins (LolC and LolE).

The protein localises to the cell inner membrane. Its function is as follows. Part of the ABC transporter complex LolCDE involved in the translocation of mature outer membrane-directed lipoproteins, from the inner membrane to the periplasmic chaperone, LolA. Responsible for the formation of the LolA-lipoprotein complex in an ATP-dependent manner. The sequence is that of Lipoprotein-releasing system ATP-binding protein LolD from Rhizobium meliloti (strain 1021) (Ensifer meliloti).